A 451-amino-acid polypeptide reads, in one-letter code: DNA-directed RNA polymerase subunit Rpo1C (451 aa).

The interval 1 to 68 (MQDIIGKIED…DDDELLDAVE (68 aa)) is unknown. Positions 69–451 (DDYQRILKVQ…SVSVVMKERK (383 aa)) are DNA-directed RNA polymerase subunit Rpo1C.

The protein belongs to the RNA polymerase beta' chain family. As to quaternary structure, part of the RNA polymerase complex.

It localises to the cytoplasm. It catalyses the reaction RNA(n) + a ribonucleoside 5'-triphosphate = RNA(n+1) + diphosphate. Functionally, DNA-dependent RNA polymerase (RNAP) catalyzes the transcription of DNA into RNA using the four ribonucleoside triphosphates as substrates. Forms part of the jaw domain. The sequence is that of DNA-directed RNA polymerase subunit Rpo1C from Methanothermobacter thermautotrophicus (strain ATCC 29096 / DSM 1053 / JCM 10044 / NBRC 100330 / Delta H) (Methanobacterium thermoautotrophicum).